Consider the following 284-residue polypeptide: Probable endonuclease 4 (284 aa).

Zn(2+) contacts are provided by His-69, His-109, Glu-145, Asp-179, His-182, His-216, Asp-229, His-231, and Glu-261.

It belongs to the AP endonuclease 2 family. Zn(2+) serves as cofactor.

It catalyses the reaction Endonucleolytic cleavage to 5'-phosphooligonucleotide end-products.. Endonuclease IV plays a role in DNA repair. It cleaves phosphodiester bonds at apurinic or apyrimidinic (AP) sites, generating a 3'-hydroxyl group and a 5'-terminal sugar phosphate. The polypeptide is Probable endonuclease 4 (Chlorobium phaeobacteroides (strain BS1)).